A 261-amino-acid polypeptide reads, in one-letter code: Cytochrome c oxidase subunit 3 (261 aa).

Over 1–15 the chain is Mitochondrial matrix; sequence MTHQTHAYHMVNPSP. The chain crosses the membrane as a helical span at residues 16–34; sequence WPLTGALSALLMTSGLIMW. Over 35-40 the chain is Mitochondrial intermembrane; sequence FHFNSV. A helical transmembrane segment spans residues 41-66; the sequence is ALLMLGLTTNMLTMYQWWRDVIREST. Over 67–72 the chain is Mitochondrial matrix; that stretch reads FQGHHT. The helical transmembrane segment at 73–105 threads the bilayer; the sequence is PNVQKGLRYGMILFIISEVLFFTGFFWAFYHSS. Over 106-128 the chain is Mitochondrial intermembrane; the sequence is LAPTPELGGCWPPTGIHPLNPLE. The helical transmembrane segment at 129-152 threads the bilayer; that stretch reads VPLLNTSVLLASGVSITWAHHSLM. Over 153 to 155 the chain is Mitochondrial matrix; the sequence is EGN. A helical membrane pass occupies residues 156–183; it reads RNHMLQALFITIALGVYFTLLQASEYYE. The Mitochondrial intermembrane portion of the chain corresponds to 184–190; it reads APFTISD. The helical transmembrane segment at 191-223 threads the bilayer; sequence GVYGSTFFVATGFHGLHVIIGSTFLIVCFFRQL. Residues 224–232 are Mitochondrial matrix-facing; it reads KFHFTSSHH. Residues 233-256 traverse the membrane as a helical segment; sequence FGFEAAAWYWHFVDVVWLFLYVSI. The Mitochondrial intermembrane segment spans residues 257-261; it reads YWWGS.

It belongs to the cytochrome c oxidase subunit 3 family. As to quaternary structure, component of the cytochrome c oxidase (complex IV, CIV), a multisubunit enzyme composed of 14 subunits. The complex is composed of a catalytic core of 3 subunits MT-CO1, MT-CO2 and MT-CO3, encoded in the mitochondrial DNA, and 11 supernumerary subunits COX4I, COX5A, COX5B, COX6A, COX6B, COX6C, COX7A, COX7B, COX7C, COX8 and NDUFA4, which are encoded in the nuclear genome. The complex exists as a monomer or a dimer and forms supercomplexes (SCs) in the inner mitochondrial membrane with NADH-ubiquinone oxidoreductase (complex I, CI) and ubiquinol-cytochrome c oxidoreductase (cytochrome b-c1 complex, complex III, CIII), resulting in different assemblies (supercomplex SCI(1)III(2)IV(1) and megacomplex MCI(2)III(2)IV(2)).

The protein resides in the mitochondrion inner membrane. It catalyses the reaction 4 Fe(II)-[cytochrome c] + O2 + 8 H(+)(in) = 4 Fe(III)-[cytochrome c] + 2 H2O + 4 H(+)(out). Its function is as follows. Component of the cytochrome c oxidase, the last enzyme in the mitochondrial electron transport chain which drives oxidative phosphorylation. The respiratory chain contains 3 multisubunit complexes succinate dehydrogenase (complex II, CII), ubiquinol-cytochrome c oxidoreductase (cytochrome b-c1 complex, complex III, CIII) and cytochrome c oxidase (complex IV, CIV), that cooperate to transfer electrons derived from NADH and succinate to molecular oxygen, creating an electrochemical gradient over the inner membrane that drives transmembrane transport and the ATP synthase. Cytochrome c oxidase is the component of the respiratory chain that catalyzes the reduction of oxygen to water. Electrons originating from reduced cytochrome c in the intermembrane space (IMS) are transferred via the dinuclear copper A center (CU(A)) of subunit 2 and heme A of subunit 1 to the active site in subunit 1, a binuclear center (BNC) formed by heme A3 and copper B (CU(B)). The BNC reduces molecular oxygen to 2 water molecules using 4 electrons from cytochrome c in the IMS and 4 protons from the mitochondrial matrix. The sequence is that of Cytochrome c oxidase subunit 3 (MT-CO3) from Nanger granti (Grant's gazelle).